The following is a 259-amino-acid chain: NAD kinase (259 aa).

Aspartate 43 acts as the Proton acceptor in catalysis. Residues 43 to 44 (DG), 111 to 112 (NE), and arginine 136 each bind NAD(+).

It belongs to the NAD kinase family. A divalent metal cation serves as cofactor.

It localises to the cytoplasm. It carries out the reaction NAD(+) + ATP = ADP + NADP(+) + H(+). In terms of biological role, involved in the regulation of the intracellular balance of NAD and NADP, and is a key enzyme in the biosynthesis of NADP. Catalyzes specifically the phosphorylation on 2'-hydroxyl of the adenosine moiety of NAD to yield NADP. The chain is NAD kinase from Mycoplasma genitalium (strain ATCC 33530 / DSM 19775 / NCTC 10195 / G37) (Mycoplasmoides genitalium).